Reading from the N-terminus, the 280-residue chain is Eukaryotic translation initiation factor 3 subunit F-1 (280 aa).

The MPN domain occupies 8-138 (VRVHPVVLFQ…LRAYVCIQLG (131 aa)).

The protein belongs to the eIF-3 subunit F family. In terms of assembly, component of the eukaryotic translation initiation factor 3 (eIF-3) complex. The eIF-3 complex interacts with pix.

Its subcellular location is the cytoplasm. Its function is as follows. Component of the eukaryotic translation initiation factor 3 (eIF-3) complex, which is involved in protein synthesis of a specialized repertoire of mRNAs and, together with other initiation factors, stimulates binding of mRNA and methionyl-tRNAi to the 40S ribosome. The eIF-3 complex specifically targets and initiates translation of a subset of mRNAs involved in cell proliferation. The protein is Eukaryotic translation initiation factor 3 subunit F-1 of Drosophila ananassae (Fruit fly).